The primary structure comprises 703 residues: Probable ATP-dependent RNA helicase vasa-like (703 aa).

3 disordered regions span residues 1 to 22 (MSDD…ESFG), 35 to 73 (NTGN…GRGG), and 88 to 167 (RDCP…RGCF). The span at 61-73 (SGGGGFGGRGRGG) shows a compositional bias: gly residues. The CCHC-type 1 zinc-finger motif lies at 77–92 (CFKCGDEGHMARDCPS). Residues 146–155 (FGFGSGSGSR) show a composition bias toward gly residues. CCHC-type zinc fingers lie at residues 166 to 181 (CFKC…DCPS) and 189 to 204 (CFKC…DCPN). The Q motif motif lies at 261–289 (ESFQSMNLRPLLLENIVKAGYGCPTPVQK). Residues 292-475 (IPNVMNGRDI…SAFLNNYLFV (184 aa)) form the Helicase ATP-binding domain. Position 305-312 (305-312 (AQTGSGKT)) interacts with ATP. The short motif at 419-422 (DEAD) is the DEAD box element. The region spanning 506 to 651 (MCEEILISAD…TIPDWLTQKA (146 aa)) is the Helicase C-terminal domain. A disordered region spans residues 676–703 (GGGRGWEKNQASSFLGGPSESNVDEEWD).

It belongs to the DEAD box helicase family. DDX4/VASA subfamily. In terms of tissue distribution, expressed in ovaries and testis. Not expressed in somatic tissue of the ovaries including follicle cells, muscle and connective tissue.

It localises to the cytoplasm. Its subcellular location is the nucleus. The protein resides in the nucleolus. The enzyme catalyses ATP + H2O = ADP + phosphate + H(+). Functionally, involved in translational control mechanisms operating in early stages of oogenesis. Required maternally in many stages of oogenesis, including cystocyte differentiation, oocyte differentiation, and specification of anterior-posterior polarity in the developing cysts. Essential for the formation and/or structural integrity of perinuclear nuage particles during germ cell formation. The polypeptide is Probable ATP-dependent RNA helicase vasa-like (Penaeus vannamei (Whiteleg shrimp)).